The chain runs to 245 residues: Carboxymethylenebutenolidase homolog (245 aa).

Ala2 carries the post-translational modification N-acetylalanine. N6-acetyllysine is present on Lys36. Catalysis depends on residues Cys132, Asp179, and His212. Residue Ser223 is modified to Phosphoserine.

This sequence belongs to the dienelactone hydrolase family. Widely expressed, with highest levels in liver, followed by kidney, small intestine and colon. Present in liver and intestine (at protein level).

It is found in the cytoplasm. The protein resides in the cytosol. Strongly inhibited by p-chloromercuribenzoate (PCMB). Partially inhibited by bis-p-nitrophenylphosphate (BNPP). Not inhibited by DFP, PMSF, eserine or EDTA. In terms of biological role, cysteine hydrolase. Can convert the prodrug olmesartan medoxomil into its pharmacologically active metabolite olmerstatan, an angiotensin receptor blocker, in liver and intestine. May also activate beta-lactam antibiotics faropenem medoxomil and lenampicillin. The protein is Carboxymethylenebutenolidase homolog (CMBL) of Homo sapiens (Human).